Reading from the N-terminus, the 247-residue chain is Adenosylcobinamide-GDP ribazoletransferase (247 aa).

A run of 5 helical transmembrane segments spans residues 34–54 (IITF…VFMV), 59–79 (CGVP…TGGF), 113–133 (GGLA…ELAL), 138–158 (ILAS…LLMY), and 194–214 (VLLP…AIFI).

It belongs to the CobS family. It depends on Mg(2+) as a cofactor.

It is found in the cell inner membrane. It carries out the reaction alpha-ribazole + adenosylcob(III)inamide-GDP = adenosylcob(III)alamin + GMP + H(+). The catalysed reaction is alpha-ribazole 5'-phosphate + adenosylcob(III)inamide-GDP = adenosylcob(III)alamin 5'-phosphate + GMP + H(+). Its pathway is cofactor biosynthesis; adenosylcobalamin biosynthesis; adenosylcobalamin from cob(II)yrinate a,c-diamide: step 7/7. Joins adenosylcobinamide-GDP and alpha-ribazole to generate adenosylcobalamin (Ado-cobalamin). Also synthesizes adenosylcobalamin 5'-phosphate from adenosylcobinamide-GDP and alpha-ribazole 5'-phosphate. The chain is Adenosylcobinamide-GDP ribazoletransferase from Escherichia coli O7:K1 (strain IAI39 / ExPEC).